A 572-amino-acid polypeptide reads, in one-letter code: O-fucosyltransferase 16 (572 aa).

The helical; Signal-anchor for type II membrane protein transmembrane segment at 17 to 37 (LLPLVIAVSLSLLILFAFLSF) threads the bilayer. N-linked (GlcNAc...) asparagine glycans are attached at residues N92 and N136. 274–276 (HLR) serves as a coordination point for substrate. N446 and N506 each carry an N-linked (GlcNAc...) asparagine glycan. The segment at 498 to 572 (ESRKLGKKNK…EPELEAMLSD (75 aa)) is disordered. Positions 521–541 (DQTEEDDPDWSEPDYEEEQSD) are enriched in acidic residues. N549 carries N-linked (GlcNAc...) asparagine glycosylation. Acidic residues predominate over residues 554 to 566 (DYDDPSTSDEPEL).

Belongs to the glycosyltransferase GT106 family.

The protein resides in the membrane. Its pathway is glycan metabolism. In Arabidopsis thaliana (Mouse-ear cress), this protein is O-fucosyltransferase 16.